Consider the following 121-residue polypeptide: Small ribosomal subunit protein uS13 (121 aa).

The interval G88–K121 is disordered. Residues A106–K121 show a composition bias toward basic residues.

It belongs to the universal ribosomal protein uS13 family. Part of the 30S ribosomal subunit. Forms a loose heterodimer with protein S19. Forms two bridges to the 50S subunit in the 70S ribosome.

In terms of biological role, located at the top of the head of the 30S subunit, it contacts several helices of the 16S rRNA. In the 70S ribosome it contacts the 23S rRNA (bridge B1a) and protein L5 of the 50S subunit (bridge B1b), connecting the 2 subunits; these bridges are implicated in subunit movement. Contacts the tRNAs in the A and P-sites. This chain is Small ribosomal subunit protein uS13, found in Lactococcus lactis subsp. cremoris (strain MG1363).